Reading from the N-terminus, the 160-residue chain is Transcriptional repressor NrdR (160 aa).

The segment at 3 to 34 (CPYCQCEDTQVKDSRPAEEGAVIRRRRVCSVC) is a zinc-finger region. The ATP-cone domain occupies 49 to 139 (LLVLKKSGRR…VYRDFRNASD (91 aa)).

This sequence belongs to the NrdR family. Zn(2+) serves as cofactor.

Negatively regulates transcription of bacterial ribonucleotide reductase nrd genes and operons by binding to NrdR-boxes. The sequence is that of Transcriptional repressor NrdR from Bartonella bacilliformis (strain ATCC 35685 / KC583 / Herrer 020/F12,63).